We begin with the raw amino-acid sequence, 478 residues long: Proline--tRNA ligase (478 aa).

The protein belongs to the class-II aminoacyl-tRNA synthetase family. ProS type 3 subfamily. As to quaternary structure, homodimer.

It is found in the cytoplasm. It catalyses the reaction tRNA(Pro) + L-proline + ATP = L-prolyl-tRNA(Pro) + AMP + diphosphate. Its function is as follows. Catalyzes the attachment of proline to tRNA(Pro) in a two-step reaction: proline is first activated by ATP to form Pro-AMP and then transferred to the acceptor end of tRNA(Pro). The protein is Proline--tRNA ligase of Clostridium botulinum (strain ATCC 19397 / Type A).